A 934-amino-acid chain; its full sequence is Serine/threonine-protein kinase PknD (934 aa).

Residues 4–296 form the Protein kinase domain; it reads YELIRLIGKG…ELRQALQPYL (293 aa). Residues 10-18 and lysine 33 each bind ATP; that span reads IGKGGMGEV. Residue aspartate 138 is the Proton acceptor of the active site.

The protein belongs to the protein kinase superfamily. Ser/Thr protein kinase family. In terms of processing, autophosphorylated on serine and threonine residues.

The catalysed reaction is L-seryl-[protein] + ATP = O-phospho-L-seryl-[protein] + ADP + H(+). It catalyses the reaction L-threonyl-[protein] + ATP = O-phospho-L-threonyl-[protein] + ADP + H(+). In terms of biological role, together with the serine/threonine kinase Pkn1, may play a role in the specific interactions with host proteins during intracellular growth. The chain is Serine/threonine-protein kinase PknD from Chlamydia trachomatis serovar A (strain ATCC VR-571B / DSM 19440 / HAR-13).